Here is a 315-residue protein sequence, read N- to C-terminus: Putative protein phosphatase 2C 24 (315 aa).

One can recognise a PPM-type phosphatase domain in the interval Ala-71–Ile-314. Mn(2+) is bound by residues Asp-102, Gly-103, Asp-238, and Asp-305.

Belongs to the PP2C family. It depends on Mg(2+) as a cofactor. Requires Mn(2+) as cofactor.

The enzyme catalyses O-phospho-L-seryl-[protein] + H2O = L-seryl-[protein] + phosphate. The catalysed reaction is O-phospho-L-threonyl-[protein] + H2O = L-threonyl-[protein] + phosphate. This Oryza sativa subsp. japonica (Rice) protein is Putative protein phosphatase 2C 24.